We begin with the raw amino-acid sequence, 494 residues long: Alpha-amylase-related protein (494 aa).

An N-terminal signal peptide occupies residues Met1 to Ala20. Gln21 is modified (pyrrolidone carboxylic acid). A disulfide bond links Cys48 and Cys104. Asn118, Gln169, and Asp178 together coordinate Ca(2+). Cys157 and Cys171 are joined by a disulfide. Arg206 is a binding site for chloride. Asp208 acts as the Nucleophile in catalysis. Residue His212 coordinates Ca(2+). Catalysis depends on Glu245, which acts as the Proton donor. Chloride is bound by residues Asn308 and Arg343. Intrachain disulfides connect Cys376/Cys382, Cys418/Cys441, and Cys448/Cys460.

The protein belongs to the glycosyl hydrolase 13 family. In terms of assembly, monomer. Ca(2+) is required as a cofactor. The cofactor is chloride.

The protein resides in the secreted. It carries out the reaction Endohydrolysis of (1-&gt;4)-alpha-D-glucosidic linkages in polysaccharides containing three or more (1-&gt;4)-alpha-linked D-glucose units.. The protein is Alpha-amylase-related protein (Amyrel) of Drosophila bocqueti (Fruit fly).